The primary structure comprises 164 residues: Large ribosomal subunit protein uL10 (164 aa).

Belongs to the universal ribosomal protein uL10 family. Part of the ribosomal stalk of the 50S ribosomal subunit. The N-terminus interacts with L11 and the large rRNA to form the base of the stalk. The C-terminus forms an elongated spine to which L12 dimers bind in a sequential fashion forming a multimeric L10(L12)X complex.

In terms of biological role, forms part of the ribosomal stalk, playing a central role in the interaction of the ribosome with GTP-bound translation factors. This chain is Large ribosomal subunit protein uL10 (rplJ), found in Helicobacter pylori (strain ATCC 700392 / 26695) (Campylobacter pylori).